Consider the following 138-residue polypeptide: Phospholipase A2 homolog crotoxin acid subunit CA (138 aa).

A signal peptide spans 1–37 (MRALWIVAVLLVGVEGSLVEFETLMMKIAGRSGISYY). 8 cysteine pairs are disulfide-bonded: cysteine 42–cysteine 131, cysteine 44–cysteine 60, cysteine 59–cysteine 111, cysteine 65–cysteine 138, cysteine 66–cysteine 104, cysteine 73–cysteine 97, cysteine 91–cysteine 102, and cysteine 131–cysteine 138. Positions 79–82 (VYTY) are excised as a propeptide. Glutamine 84 is modified (pyrrolidone carboxylic acid). A propeptide spanning residues 119 to 124 (YDYKYL) is cleaved from the precursor. The residue at position 125 (glutamine 125) is a Pyrrolidone carboxylic acid.

The protein belongs to the phospholipase A2 family. Group II subfamily. D49 sub-subfamily. Heterodimer of one of the acidic (CA1, CA2, CA3 or CA4) and one of the basic (CBa1, CBa2, CBb, CBc or CBd) subunits; non-covalently linked. The acidic subunit is non-toxic, without enzymatic activity and comprises 3 peptides that are cross-linked by 5 disulfide bridges. The basic subunit is toxic, has phospholipase A2 activity and is composed of a single chain. Multiple variants of each subunit give different crotoxin complexes that can be subdivided into 2 classes: (1) those of high toxicity, low PLA2 activity (CBb, CBc and CBd linked with high affinity to any CA) and high stability (K(d)=4.5 nM) and (2) those of moderate toxicity, high PLA2 activity (CBa2 linked with low affinity to any CA) and low stability (K(d)=25 nM). In terms of tissue distribution, expressed by the venom gland.

The protein resides in the secreted. In terms of biological role, CAalpha-CAbeta-CAgamma: The acidic subunit of crotoxin (CA) is a heterotrimer of three disulfide-linked chains generated by post-translational maturation of a PLA2-like precursor. CA has no PLA2 activity and is not neurotoxic by itself, but plays several important functions in the crotoxin complex by increasing the lethal potency of the uncomplexed CB subunit. It acts by physically occluding the hydrophobic interfacial binding surface (IBS) of CB. This effect decreases the adsorption of CB to phospholipid membranes, targeting the crotoxin complex to reach the specific presynaptic receptor (R48) at the neuromuscular junction. It also prevents the formation of the reactive CB dimer. Moreover, the CA subunit inhibits the catalytic activity by partially masking the catalytic site of CB and inhibits its anticoagulant activity. Functionally, heterodimer CA-CB: Crotoxin is a potent presynaptic neurotoxin that possesses phospholipase A2 (PLA2) activity and exerts a lethal action by blocking neuromuscular transmission. It consists of a non-covalent association of a basic and weakly toxic PLA2 subunit (CBa2, CBb, CBc, or CBd), with a small acidic, non-enzymatic and non-toxic subunit (CA1, CA2, CA3 or CA4). The complex acts by binding to a specific 48-kDa protein (R48/CAPT) receptor located on presynaptic membranes, forming a transient ternary complex CA-CB-R48, followed by dissociation of the CA-CB complex and release of the CA subunit. At equilibrium, only the CB subunits remain associated with the specific crotoxin receptor. In addition to neurotoxicity, crotoxin has been found to exert myotoxicity, nephrotoxicity, and cardiovascular toxicity. Moreover, anti-inflammatory, immunomodulatory, anti-tumor and analgesic effects of crotoxin have also been reported. Its function is as follows. Found in the venom as a monomer and stabilized by one disulfide bond (Cys-131 and Cys-138). This peptide induces potent antinociceptive effects in acute and chronic pain models. This effect is mediated by the release of peripheral dynorphin A, an endogenous agonist of kappa-opioid receptors, and this release is dependent on cannabinoid receptor CB2 activation. This Crotalus durissus terrificus (South American rattlesnake) protein is Phospholipase A2 homolog crotoxin acid subunit CA.